Reading from the N-terminus, the 525-residue chain is Transmembrane protein 184C (525 aa).

7 helical membrane passes run leucine 17–phenylalanine 37, serine 48–leucine 68, isoleucine 83–tyrosine 103, valine 121–isoleucine 141, tyrosine 212–tyrosine 232, valine 254–isoleucine 274, and alanine 287–alanine 307. 2 disordered regions span residues proline 358–glycine 394 and leucine 483–proline 525. Positions serine 373–serine 388 are enriched in low complexity. The segment covering leucine 483 to glutamine 502 has biased composition (polar residues). The segment covering glutamate 503–proline 525 has biased composition (low complexity).

It belongs to the TMEM184 family.

It localises to the membrane. Possible tumor suppressor which may play a role in cell growth. This is Transmembrane protein 184C (Tmem184c) from Mus musculus (Mouse).